We begin with the raw amino-acid sequence, 242 residues long: UPF0309 protein BSUIS_B0903 (242 aa).

The region spanning alanine 30 to proline 214 is the SIS domain.

It belongs to the UPF0309 family.

In Brucella suis (strain ATCC 23445 / NCTC 10510), this protein is UPF0309 protein BSUIS_B0903.